The primary structure comprises 383 residues: L-lactate dehydrogenase (383 aa).

Positions methionine 1–alanine 380 constitute an FMN hydroxy acid dehydrogenase domain. Tyrosine 24 contacts substrate. FMN is bound by residues serine 106 and glutamine 127. A substrate-binding site is contributed by tyrosine 129. Residue threonine 155 participates in FMN binding. A substrate-binding site is contributed by arginine 164. Lysine 251 is a binding site for FMN. The active-site Proton acceptor is the histidine 275. Position 278 (arginine 278) interacts with substrate. FMN is bound at residue aspartate 306–arginine 330.

Belongs to the FMN-dependent alpha-hydroxy acid dehydrogenase family. FMN is required as a cofactor.

It is found in the cell inner membrane. It carries out the reaction (S)-lactate + A = pyruvate + AH2. In terms of biological role, catalyzes the conversion of L-lactate to pyruvate. Is coupled to the respiratory chain. The sequence is that of L-lactate dehydrogenase from Bartonella tribocorum (strain CIP 105476 / IBS 506).